The sequence spans 196 residues: NADH-quinone oxidoreductase subunit B (196 aa).

The [4Fe-4S] cluster site is built by Cys-75, Cys-76, Cys-140, and Cys-170.

The protein belongs to the complex I 20 kDa subunit family. NDH-1 is composed of 14 different subunits. Subunits NuoB, C, D, E, F, and G constitute the peripheral sector of the complex. It depends on [4Fe-4S] cluster as a cofactor.

Its subcellular location is the cell inner membrane. The catalysed reaction is a quinone + NADH + 5 H(+)(in) = a quinol + NAD(+) + 4 H(+)(out). Its function is as follows. NDH-1 shuttles electrons from NADH, via FMN and iron-sulfur (Fe-S) centers, to quinones in the respiratory chain. Couples the redox reaction to proton translocation (for every two electrons transferred, four hydrogen ions are translocated across the cytoplasmic membrane), and thus conserves the redox energy in a proton gradient. The protein is NADH-quinone oxidoreductase subunit B of Caulobacter sp. (strain K31).